A 227-amino-acid polypeptide reads, in one-letter code: Cytochrome c oxidase subunit 2 (227 aa).

Residues 1-14 (MAYPFQLGLQDATS) are Mitochondrial intermembrane-facing. Residues 15–45 (PIMEELMNFHDHTLMIVFLISSLVLYIISLM) traverse the membrane as a helical segment. Topologically, residues 46–59 (LTTKLTHTSTMDAQ) are mitochondrial matrix. Residues 60–87 (EVETIWTILPAVILILIALPSLRILYMM) form a helical membrane-spanning segment. The Mitochondrial intermembrane portion of the chain corresponds to 88-227 (DEINNPVLTV…NFENWSTSMI (140 aa)). H161, C196, E198, C200, H204, and M207 together coordinate Cu cation. E198 provides a ligand contact to Mg(2+).

Belongs to the cytochrome c oxidase subunit 2 family. Component of the cytochrome c oxidase (complex IV, CIV), a multisubunit enzyme composed of 14 subunits. The complex is composed of a catalytic core of 3 subunits MT-CO1, MT-CO2 and MT-CO3, encoded in the mitochondrial DNA, and 11 supernumerary subunits COX4I, COX5A, COX5B, COX6A, COX6B, COX6C, COX7A, COX7B, COX7C, COX8 and NDUFA4, which are encoded in the nuclear genome. The complex exists as a monomer or a dimer and forms supercomplexes (SCs) in the inner mitochondrial membrane with NADH-ubiquinone oxidoreductase (complex I, CI) and ubiquinol-cytochrome c oxidoreductase (cytochrome b-c1 complex, complex III, CIII), resulting in different assemblies (supercomplex SCI(1)III(2)IV(1) and megacomplex MCI(2)III(2)IV(2)). Found in a complex with TMEM177, COA6, COX18, COX20, SCO1 and SCO2. Interacts with TMEM177 in a COX20-dependent manner. Interacts with COX20. Interacts with COX16. It depends on Cu cation as a cofactor.

The protein localises to the mitochondrion inner membrane. It catalyses the reaction 4 Fe(II)-[cytochrome c] + O2 + 8 H(+)(in) = 4 Fe(III)-[cytochrome c] + 2 H2O + 4 H(+)(out). Functionally, component of the cytochrome c oxidase, the last enzyme in the mitochondrial electron transport chain which drives oxidative phosphorylation. The respiratory chain contains 3 multisubunit complexes succinate dehydrogenase (complex II, CII), ubiquinol-cytochrome c oxidoreductase (cytochrome b-c1 complex, complex III, CIII) and cytochrome c oxidase (complex IV, CIV), that cooperate to transfer electrons derived from NADH and succinate to molecular oxygen, creating an electrochemical gradient over the inner membrane that drives transmembrane transport and the ATP synthase. Cytochrome c oxidase is the component of the respiratory chain that catalyzes the reduction of oxygen to water. Electrons originating from reduced cytochrome c in the intermembrane space (IMS) are transferred via the dinuclear copper A center (CU(A)) of subunit 2 and heme A of subunit 1 to the active site in subunit 1, a binuclear center (BNC) formed by heme A3 and copper B (CU(B)). The BNC reduces molecular oxygen to 2 water molecules using 4 electrons from cytochrome c in the IMS and 4 protons from the mitochondrial matrix. This Apodemus mystacinus (Broad-toothed field mouse) protein is Cytochrome c oxidase subunit 2 (MT-CO2).